Consider the following 938-residue polypeptide: Isoleucine--tRNA ligase (938 aa).

The 'HIGH' region motif lies at 61-71 (PYANGDIHLGT). E559 provides a ligand contact to L-isoleucyl-5'-AMP. Positions 601–605 (KMSKS) match the 'KMSKS' region motif. Position 604 (K604) interacts with ATP. Zn(2+)-binding residues include C904, C907, C923, and C926.

This sequence belongs to the class-I aminoacyl-tRNA synthetase family. IleS type 1 subfamily. As to quaternary structure, monomer. Requires Zn(2+) as cofactor.

Its subcellular location is the cytoplasm. The catalysed reaction is tRNA(Ile) + L-isoleucine + ATP = L-isoleucyl-tRNA(Ile) + AMP + diphosphate. Its function is as follows. Catalyzes the attachment of isoleucine to tRNA(Ile). As IleRS can inadvertently accommodate and process structurally similar amino acids such as valine, to avoid such errors it has two additional distinct tRNA(Ile)-dependent editing activities. One activity is designated as 'pretransfer' editing and involves the hydrolysis of activated Val-AMP. The other activity is designated 'posttransfer' editing and involves deacylation of mischarged Val-tRNA(Ile). The polypeptide is Isoleucine--tRNA ligase (Symbiobacterium thermophilum (strain DSM 24528 / JCM 14929 / IAM 14863 / T)).